A 163-amino-acid chain; its full sequence is Ankyrin repeat domain-containing protein 37 (163 aa).

ANK repeat units lie at residues Leu-29–Gln-58, Phe-62–Met-91, and Asp-95–Thr-124. The short motif at Gln-129–Gln-149 is the Nuclear localization signal element.

The protein localises to the nucleus. It is found in the cytoplasm. In Xenopus tropicalis (Western clawed frog), this protein is Ankyrin repeat domain-containing protein 37 (ankrd37).